The sequence spans 906 residues: Protein translocase subunit SecA (906 aa).

Residues Gln89, 107-111 (GEGKT), and Asp502 each bind ATP. Residues Cys885, Cys887, Cys896, and His897 each contribute to the Zn(2+) site.

Belongs to the SecA family. As to quaternary structure, monomer and homodimer. Part of the essential Sec protein translocation apparatus which comprises SecA, SecYEG and auxiliary proteins SecDF-YajC and YidC. Requires Zn(2+) as cofactor.

The protein localises to the cell inner membrane. Its subcellular location is the cytoplasm. The enzyme catalyses ATP + H2O + cellular proteinSide 1 = ADP + phosphate + cellular proteinSide 2.. Functionally, part of the Sec protein translocase complex. Interacts with the SecYEG preprotein conducting channel. Has a central role in coupling the hydrolysis of ATP to the transfer of proteins into and across the cell membrane, serving both as a receptor for the preprotein-SecB complex and as an ATP-driven molecular motor driving the stepwise translocation of polypeptide chains across the membrane. This is Protein translocase subunit SecA from Rhizobium rhizogenes (strain K84 / ATCC BAA-868) (Agrobacterium radiobacter).